Reading from the N-terminus, the 198-residue chain is UPF0314 protein Atu8092 (198 aa).

The next 3 membrane-spanning stretches (helical) occupy residues 14–34, 64–84, and 150–170; these read LRWFGVAAGLLLLQIVILYAM, WYTPSHIIHGFLFYWFAWLLF, and VPVWLTVVIAIFFEIFTGWLI.

Belongs to the UPF0314 family.

Its subcellular location is the cell membrane. This Agrobacterium fabrum (strain C58 / ATCC 33970) (Agrobacterium tumefaciens (strain C58)) protein is UPF0314 protein Atu8092.